Reading from the N-terminus, the 450-residue chain is Tubulin alpha-1 chain (450 aa).

The GTP site is built by Gln11, Glu71, Gly144, Thr145, Thr179, Asn206, and Asn228. Glu71 is a Mg(2+) binding site. Glu254 is an active-site residue. The residue at position 349 (Thr349) is a Phosphothreonine. A disordered region spans residues 431-450 (DYEEVGGEGAEDDDEEGDEY).

Belongs to the tubulin family. In terms of assembly, dimer of alpha and beta chains. A typical microtubule is a hollow water-filled tube with an outer diameter of 25 nm and an inner diameter of 15 nM. Alpha-beta heterodimers associate head-to-tail to form protofilaments running lengthwise along the microtubule wall with the beta-tubulin subunit facing the microtubule plus end conferring a structural polarity. Microtubules usually have 13 protofilaments but different protofilament numbers can be found in some organisms and specialized cells. Mg(2+) is required as a cofactor. Undergoes a tyrosination/detyrosination cycle, the cyclic removal and re-addition of a C-terminal tyrosine residue by the enzymes tubulin tyrosine carboxypeptidase (TTCP) and tubulin tyrosine ligase (TTL), respectively.

It is found in the cytoplasm. It localises to the cytoskeleton. It carries out the reaction GTP + H2O = GDP + phosphate + H(+). Functionally, tubulin is the major constituent of microtubules, a cylinder consisting of laterally associated linear protofilaments composed of alpha- and beta-tubulin heterodimers. Microtubules grow by the addition of GTP-tubulin dimers to the microtubule end, where a stabilizing cap forms. Below the cap, tubulin dimers are in GDP-bound state, owing to GTPase activity of alpha-tubulin. The sequence is that of Tubulin alpha-1 chain (TUBA1) from Arabidopsis thaliana (Mouse-ear cress).